The following is a 106-amino-acid chain: UPF0145 protein GSU2791 (106 aa).

The protein belongs to the UPF0145 family.

This Geobacter sulfurreducens (strain ATCC 51573 / DSM 12127 / PCA) protein is UPF0145 protein GSU2791.